Consider the following 388-residue polypeptide: Succinate--CoA ligase [ADP-forming] subunit beta (388 aa).

The ATP-grasp domain occupies 9-244 (KAIFRSMGVA…LEEEDPKEIE (236 aa)). ATP is bound by residues Lys46, 53–55 (GRG), Glu99, Cys102, and Glu107. The Mg(2+) site is built by Asn199 and Asp213. Residues Asn264 and 321–323 (GIM) each bind substrate.

Belongs to the succinate/malate CoA ligase beta subunit family. Heterotetramer of two alpha and two beta subunits. Mg(2+) is required as a cofactor.

The catalysed reaction is succinate + ATP + CoA = succinyl-CoA + ADP + phosphate. It carries out the reaction GTP + succinate + CoA = succinyl-CoA + GDP + phosphate. It participates in carbohydrate metabolism; tricarboxylic acid cycle; succinate from succinyl-CoA (ligase route): step 1/1. Succinyl-CoA synthetase functions in the citric acid cycle (TCA), coupling the hydrolysis of succinyl-CoA to the synthesis of either ATP or GTP and thus represents the only step of substrate-level phosphorylation in the TCA. The beta subunit provides nucleotide specificity of the enzyme and binds the substrate succinate, while the binding sites for coenzyme A and phosphate are found in the alpha subunit. The chain is Succinate--CoA ligase [ADP-forming] subunit beta from Staphylococcus saprophyticus subsp. saprophyticus (strain ATCC 15305 / DSM 20229 / NCIMB 8711 / NCTC 7292 / S-41).